The sequence spans 212 residues: Pyridoxine/pyridoxamine 5'-phosphate oxidase (212 aa).

Residues 8–11 and lysine 66 each bind substrate; that span reads RRSY. FMN is bound by residues 61–66, 76–77, arginine 82, lysine 83, and glutamine 105; these read RIVLLK and FT. 3 residues coordinate substrate: tyrosine 123, arginine 127, and serine 131. FMN-binding positions include 140-141 and tryptophan 184; that span reads QS. 190-192 lines the substrate pocket; the sequence is RLH. FMN is bound at residue arginine 194.

The protein belongs to the pyridoxamine 5'-phosphate oxidase family. Homodimer. FMN is required as a cofactor.

It carries out the reaction pyridoxamine 5'-phosphate + O2 + H2O = pyridoxal 5'-phosphate + H2O2 + NH4(+). The catalysed reaction is pyridoxine 5'-phosphate + O2 = pyridoxal 5'-phosphate + H2O2. Its pathway is cofactor metabolism; pyridoxal 5'-phosphate salvage; pyridoxal 5'-phosphate from pyridoxamine 5'-phosphate: step 1/1. The protein operates within cofactor metabolism; pyridoxal 5'-phosphate salvage; pyridoxal 5'-phosphate from pyridoxine 5'-phosphate: step 1/1. Its function is as follows. Catalyzes the oxidation of either pyridoxine 5'-phosphate (PNP) or pyridoxamine 5'-phosphate (PMP) into pyridoxal 5'-phosphate (PLP). In Cupriavidus necator (strain ATCC 17699 / DSM 428 / KCTC 22496 / NCIMB 10442 / H16 / Stanier 337) (Ralstonia eutropha), this protein is Pyridoxine/pyridoxamine 5'-phosphate oxidase.